Here is a 458-residue protein sequence, read N- to C-terminus: Sushi repeat-containing protein SRPX2 (458 aa).

The signal sequence occupies residues methionine 1 to serine 18. Sushi domains lie at alanine 62–arginine 112, isoleucine 113–aspartate 171, and arginine 255–proline 314. Disulfide bonds link cysteine 64–cysteine 98, cysteine 84–cysteine 110, cysteine 115–cysteine 156, and cysteine 142–cysteine 169. One can recognise an HYR domain in the interval valine 170 to valine 254. Cystine bridges form between cysteine 257–cysteine 299 and cysteine 285–cysteine 312.

Forms homooligomers.

It is found in the secreted. The protein resides in the cytoplasm. It localises to the cell surface. Its subcellular location is the synapse. Its function is as follows. May play a role in angiogenesis, synapse formation, cellular migration and adhesion. The chain is Sushi repeat-containing protein SRPX2 (srpx2) from Xenopus laevis (African clawed frog).